Here is a 280-residue protein sequence, read N- to C-terminus: Pantothenate synthetase (280 aa).

31–38 (MGNLHAGH) is an ATP binding site. The Proton donor role is filled by His38. Gln62 provides a ligand contact to (R)-pantoate. Gln62 contacts beta-alanine. An ATP-binding site is contributed by 150-153 (GKKD). A (R)-pantoate-binding site is contributed by Gln156. ATP-binding positions include Val179 and 187–190 (MSSR).

The protein belongs to the pantothenate synthetase family. As to quaternary structure, homodimer.

It localises to the cytoplasm. It carries out the reaction (R)-pantoate + beta-alanine + ATP = (R)-pantothenate + AMP + diphosphate + H(+). The protein operates within cofactor biosynthesis; (R)-pantothenate biosynthesis; (R)-pantothenate from (R)-pantoate and beta-alanine: step 1/1. Catalyzes the condensation of pantoate with beta-alanine in an ATP-dependent reaction via a pantoyl-adenylate intermediate. This Xanthomonas axonopodis pv. citri (strain 306) protein is Pantothenate synthetase.